A 201-amino-acid polypeptide reads, in one-letter code: Potassium-transporting ATPase KdpC subunit (201 aa).

The chain crosses the membrane as a helical span at residues 13-33; the sequence is IIFIIFTILCGGIYTIFITGI.

This sequence belongs to the KdpC family. As to quaternary structure, the system is composed of three essential subunits: KdpA, KdpB and KdpC.

It localises to the cell membrane. In terms of biological role, part of the high-affinity ATP-driven potassium transport (or Kdp) system, which catalyzes the hydrolysis of ATP coupled with the electrogenic transport of potassium into the cytoplasm. This subunit acts as a catalytic chaperone that increases the ATP-binding affinity of the ATP-hydrolyzing subunit KdpB by the formation of a transient KdpB/KdpC/ATP ternary complex. This chain is Potassium-transporting ATPase KdpC subunit, found in Clostridium botulinum (strain Alaska E43 / Type E3).